The following is a 387-amino-acid chain: Peroxisomal membrane protein LPX1 (387 aa).

Residues 385-387 are peroxisomal targeting signal type 1; that stretch reads QKL.

Its subcellular location is the peroxisome matrix. Has acyl esterase, lipase and phospholipase A activity. This is Peroxisomal membrane protein LPX1 (LPX1) from Saccharomyces cerevisiae (strain ATCC 204508 / S288c) (Baker's yeast).